We begin with the raw amino-acid sequence, 131 residues long: Small ribosomal subunit protein uS8 (131 aa).

The protein belongs to the universal ribosomal protein uS8 family. Part of the 30S ribosomal subunit. Contacts proteins S5 and S12.

In terms of biological role, one of the primary rRNA binding proteins, it binds directly to 16S rRNA central domain where it helps coordinate assembly of the platform of the 30S subunit. The polypeptide is Small ribosomal subunit protein uS8 (Campylobacter jejuni (strain RM1221)).